The following is a 481-amino-acid chain: tRNA-guanine(15) transglycosylase (481 aa).

The Nucleophile role is filled by aspartate 87. The substrate site is built by aspartate 122 and alanine 191. Residues cysteine 273, cysteine 275, and cysteine 278 each contribute to the Zn(2+) site.

It belongs to the archaeosine tRNA-ribosyltransferase family. Zn(2+) serves as cofactor.

It carries out the reaction guanosine(15) in tRNA + 7-cyano-7-deazaguanine = 7-cyano-7-carbaguanosine(15) in tRNA + guanine. It participates in tRNA modification; archaeosine-tRNA biosynthesis. Functionally, exchanges the guanine residue with 7-cyano-7-deazaguanine (preQ0) at position 15 in the dihydrouridine loop (D-loop) of archaeal tRNAs. This chain is tRNA-guanine(15) transglycosylase, found in Archaeoglobus fulgidus (strain ATCC 49558 / DSM 4304 / JCM 9628 / NBRC 100126 / VC-16).